The sequence spans 660 residues: Oligopeptide-binding protein AliA (660 aa).

The signal sequence occupies residues 1–22 (MKSSKLFALAGVTLLAATTLAA). Residue cysteine 23 is the site of N-palmitoyl cysteine attachment. The S-diacylglycerol cysteine moiety is linked to residue cysteine 23. The segment at 638–660 (EKWMKEKEESNKKAQEDLAKHVK) is disordered.

It belongs to the bacterial solute-binding protein 5 family.

The protein localises to the cell membrane. Part of the binding-protein-dependent transport system for oligopeptides; probably an oligopeptide binding protein. The chain is Oligopeptide-binding protein AliA (aliA) from Streptococcus pneumoniae serotype 4 (strain ATCC BAA-334 / TIGR4).